The chain runs to 212 residues: Cytochrome c biogenesis ATP-binding export protein CcmA (212 aa).

Residues 8-212 (LQATALACER…RSIDLAKGSA (205 aa)) form the ABC transporter domain. 40–47 (GPNGSGKT) serves as a coordination point for ATP.

The protein belongs to the ABC transporter superfamily. CcmA exporter (TC 3.A.1.107) family. In terms of assembly, the complex is composed of two ATP-binding proteins (CcmA) and two transmembrane proteins (CcmB).

The protein resides in the cell inner membrane. It carries out the reaction heme b(in) + ATP + H2O = heme b(out) + ADP + phosphate + H(+). In terms of biological role, part of the ABC transporter complex CcmAB involved in the biogenesis of c-type cytochromes; once thought to export heme, this seems not to be the case, but its exact role is uncertain. Responsible for energy coupling to the transport system. The protein is Cytochrome c biogenesis ATP-binding export protein CcmA of Pseudomonas syringae pv. tomato (strain ATCC BAA-871 / DC3000).